The primary structure comprises 901 residues: Phosphatidylinositol 3-kinase catalytic subunit type 3 (901 aa).

The region spanning 21–189 (LQTNVQVKVA…DLLFKQVTRQ (169 aa)) is the C2 PI3K-type domain. The region spanning 302 to 527 (RHRQVKPNKQ…SKMYQNIQDR (226 aa)) is the PIK helical domain. Positions 607–886 (IPDTASFFKS…QIESSLNAKM (280 aa)) constitute a PI3K/PI4K catalytic domain. The segment at 613–619 (FFKSEMM) is G-loop. Positions 755–763 (GLGDRHLDN) are catalytic loop. The segment at 774–795 (HVDFGFILGRDPKPMPPPMKLT) is activation loop.

The protein belongs to the PI3/PI4-kinase family. As to quaternary structure, interacts with bec-1. May interact with dyn-1. Mn(2+) is required as a cofactor. In terms of tissue distribution, ubiquitous.

The protein resides in the nucleus outer membrane. It is found in the cytoplasm. It localises to the cytoplasmic granule. Its subcellular location is the cell projection. The protein localises to the phagocytic cup. The catalysed reaction is a 1,2-diacyl-sn-glycero-3-phospho-(1D-myo-inositol) + ATP = a 1,2-diacyl-sn-glycero-3-phospho-(1D-myo-inositol-3-phosphate) + ADP + H(+). With respect to regulation, inhibited by wortmannin. Functionally, catalytic subunit of the PI3K complex that mediates formation of phosphatidylinositol 3-phosphate. Together with bec-1, mediates the production of phosphatidylinositol 3-phosphate on intracellular vesicles and thereby regulates membrane trafficking. Plays a role in endosome-to-Golgi retrograde transport of mig-14. Involved in clearance of apoptotic cell corpses by phagosomes. Phagosome maturation requires two sequential and non-overlapping pulses of phosphatidylinositol-3-phosphate (PI3P) on the vesicle surface which mediates recruitment of sortins snx-1 and lst-4 and small GTPases rab-5, rab-2 and rab-7, downstream of dynamin dyn-1. The first pulse is initiated by piki-1, then maintained by vps-34 which also produces the second pulse. Required for embryonic development. Together with bec-1, involved in L3/L4 larval molting stage probably by regulating cuticle shedding. Regulates the expansion of the nucleus outer membrane. Involved in the secretion and localization of lrp-1 at the apical surface of hyp7 syncytium. May regulate endocytosis in hypodermal cells. May play a role in the formation of gut granules (a lysosome-related organelle). Plays a role in germ stem cell proliferation during larval development. This is Phosphatidylinositol 3-kinase catalytic subunit type 3 from Caenorhabditis elegans.